The sequence spans 259 residues: Pyrroloquinoline-quinone synthase (259 aa).

This sequence belongs to the PqqC family.

It catalyses the reaction 6-(2-amino-2-carboxyethyl)-7,8-dioxo-1,2,3,4,7,8-hexahydroquinoline-2,4-dicarboxylate + 3 O2 = pyrroloquinoline quinone + 2 H2O2 + 2 H2O + H(+). The protein operates within cofactor biosynthesis; pyrroloquinoline quinone biosynthesis. In terms of biological role, ring cyclization and eight-electron oxidation of 3a-(2-amino-2-carboxyethyl)-4,5-dioxo-4,5,6,7,8,9-hexahydroquinoline-7,9-dicarboxylic-acid to PQQ. The chain is Pyrroloquinoline-quinone synthase from Bradyrhizobium sp. (strain ORS 278).